Consider the following 519-residue polypeptide: LysM domain-containing protein ARB_03442 (519 aa).

The first 19 residues, 1–19, serve as a signal peptide directing secretion; it reads MGQLKQLAGILALASPAIA. N-linked (GlcNAc...) asparagine glycosylation is present at Asn47. In terms of domain architecture, LysM spans 312 to 358; the sequence is KYYNVVAGDTCASISSEFEVTMDELLTYNPELHPNCENLWANFAICV. The segment at 314–358 is lysM domain; that stretch reads YNVVAGDTCASISSEFEVTMDELLTYNPELHPNCENLWANFAICV. Over residues 407–416 the composition is skewed to low complexity; sequence PDAPDAQGQT. The disordered stretch occupies residues 407–458; that stretch reads PDAPDAQGQTVHDDEPPEEPHIEEPPKDIPAGDDDDRKKAKLPLPSGKYPLP. Residues 417-433 show a composition bias toward basic and acidic residues; sequence VHDDEPPEEPHIEEPPK. Asn460 carries N-linked (GlcNAc...) asparagine glycosylation. One can recognise a Chitin-binding type-1 domain in the interval 467–510; that stretch reads DGSCNEYISCVGSPFGVCCSTSGWCGYGKPWCGVGNCVSGYCDT. Intrachain disulfides connect Cys470-Cys485, Cys476-Cys491, Cys484-Cys498, and Cys503-Cys508.

It localises to the secreted. In terms of biological role, might have a role in sequestration of chitin oligosaccharides (breakdown products of fungal cell walls that are released during invasion and act as triggers of host immunity) to dampen host defense. This is LysM domain-containing protein ARB_03442 from Arthroderma benhamiae (strain ATCC MYA-4681 / CBS 112371) (Trichophyton mentagrophytes).